Reading from the N-terminus, the 395-residue chain is Phosphoglycerate kinase (395 aa).

Residues 20-22 (DLN), Arg35, 58-61 (HFGR), Arg117, and Arg150 contribute to the substrate site. Residues Lys200, Glu322, and 352-355 (GGDT) contribute to the ATP site.

This sequence belongs to the phosphoglycerate kinase family. Monomer.

It is found in the cytoplasm. The catalysed reaction is (2R)-3-phosphoglycerate + ATP = (2R)-3-phospho-glyceroyl phosphate + ADP. It participates in carbohydrate degradation; glycolysis; pyruvate from D-glyceraldehyde 3-phosphate: step 2/5. This Brucella suis biovar 1 (strain 1330) protein is Phosphoglycerate kinase.